Reading from the N-terminus, the 418-residue chain is EPS I polysaccharide export inner membrane protein EpsF (418 aa).

10 consecutive transmembrane segments (helical) span residues 21-41, 45-65, 142-162, 170-190, 222-242, 262-282, 296-316, 326-346, 347-367, and 377-397; these read VLVV…LPII, CAAI…LATA, PLLV…IAIY, YVVF…GSAI, AGTH…VLFL, LIVL…EFVM, SAWE…AWLL, MAFL…PAVG, ARLF…FFFA, and KTLA…IVSA.

This sequence to S.marcescens SfuB.

The protein localises to the cell inner membrane. Probably involved in polymerization and/or export of exopolysaccharide EPS I which functions as a virulence factor. May play a role in export of EPS I or its intermediates across the membranes. This is EPS I polysaccharide export inner membrane protein EpsF (epsF) from Ralstonia nicotianae (strain ATCC BAA-1114 / GMI1000) (Ralstonia solanacearum).